The primary structure comprises 329 residues: 4-hydroxythreonine-4-phosphate dehydrogenase (329 aa).

2 residues coordinate substrate: His-136 and Thr-137. The a divalent metal cation site is built by His-166, His-211, and His-266. Substrate contacts are provided by Lys-274, Asn-283, and Arg-292.

This sequence belongs to the PdxA family. Homodimer. It depends on Zn(2+) as a cofactor. Requires Mg(2+) as cofactor. Co(2+) is required as a cofactor.

The protein resides in the cytoplasm. It carries out the reaction 4-(phosphooxy)-L-threonine + NAD(+) = 3-amino-2-oxopropyl phosphate + CO2 + NADH. Its pathway is cofactor biosynthesis; pyridoxine 5'-phosphate biosynthesis; pyridoxine 5'-phosphate from D-erythrose 4-phosphate: step 4/5. In terms of biological role, catalyzes the NAD(P)-dependent oxidation of 4-(phosphooxy)-L-threonine (HTP) into 2-amino-3-oxo-4-(phosphooxy)butyric acid which spontaneously decarboxylates to form 3-amino-2-oxopropyl phosphate (AHAP). The sequence is that of 4-hydroxythreonine-4-phosphate dehydrogenase from Escherichia coli O139:H28 (strain E24377A / ETEC).